The primary structure comprises 168 residues: Signal peptidase I V (168 aa).

Residues 1 to 6 (MKKRFW) lie on the Cytoplasmic side of the membrane. A helical transmembrane segment spans residues 7–26 (FLAGVVSVVLAIQVKNAVFI). Residues 27-168 (DYKVEGVSMN…NIVGVISDAE (142 aa)) are Extracellular-facing. Active-site residues include serine 34 and lysine 75.

It belongs to the peptidase S26 family.

The protein resides in the cell membrane. The catalysed reaction is Cleavage of hydrophobic, N-terminal signal or leader sequences from secreted and periplasmic proteins.. This is Signal peptidase I V (sipV) from Bacillus subtilis (strain 168).